We begin with the raw amino-acid sequence, 186 residues long: UPF0301 protein Nmul_A2478 (186 aa).

Belongs to the UPF0301 (AlgH) family.

This chain is UPF0301 protein Nmul_A2478, found in Nitrosospira multiformis (strain ATCC 25196 / NCIMB 11849 / C 71).